A 417-amino-acid chain; its full sequence is Snake venom metalloproteinase aculysin-1 (417 aa).

An N-terminal signal peptide occupies residues 1-20 (MIQVLLVTICLAAFPYQGSS). Residues 21 to 189 (IMLESGKVND…KKPSWLNLTP (169 aa)) constitute a propeptide that is removed on maturation. The region spanning 197-392 (TSVNLQLIVD…KKPKCIHKKS (196 aa)) is the Peptidase M12B domain. 3 cysteine pairs are disulfide-bonded: C308-C387, C349-C371, and C351-C354. Zn(2+) is bound at residue H333. Residue E334 is part of the active site. Zn(2+)-binding residues include H337 and H343. The propeptide occupies 393-417 (LKTDTVSTSVSGNEPLDDNVDGFHA). Residues 398 to 417 (VSTSVSGNEPLDDNVDGFHA) are disordered. Acidic residues predominate over residues 407–417 (PLDDNVDGFHA).

This sequence belongs to the venom metalloproteinase (M12B) family. P-I subfamily. Monomer. Zn(2+) is required as a cofactor. Expressed by the venom gland.

The protein resides in the secreted. Its function is as follows. This protein is an alkaline zinc metalloprotease from snake venom that possesses weak hemorrhagic activity. The chain is Snake venom metalloproteinase aculysin-1 from Deinagkistrodon acutus (Hundred-pace snake).